Consider the following 483-residue polypeptide: Aspartyl/glutamyl-tRNA(Asn/Gln) amidotransferase subunit B (483 aa).

The protein belongs to the GatB/GatE family. GatB subfamily. In terms of assembly, heterotrimer of A, B and C subunits.

The enzyme catalyses L-glutamyl-tRNA(Gln) + L-glutamine + ATP + H2O = L-glutaminyl-tRNA(Gln) + L-glutamate + ADP + phosphate + H(+). The catalysed reaction is L-aspartyl-tRNA(Asn) + L-glutamine + ATP + H2O = L-asparaginyl-tRNA(Asn) + L-glutamate + ADP + phosphate + 2 H(+). Allows the formation of correctly charged Asn-tRNA(Asn) or Gln-tRNA(Gln) through the transamidation of misacylated Asp-tRNA(Asn) or Glu-tRNA(Gln) in organisms which lack either or both of asparaginyl-tRNA or glutaminyl-tRNA synthetases. The reaction takes place in the presence of glutamine and ATP through an activated phospho-Asp-tRNA(Asn) or phospho-Glu-tRNA(Gln). The polypeptide is Aspartyl/glutamyl-tRNA(Asn/Gln) amidotransferase subunit B (Granulibacter bethesdensis (strain ATCC BAA-1260 / CGDNIH1)).